The primary structure comprises 407 residues: Indoleamine 2,3-dioxygenase 1 (407 aa).

Histidine 350 lines the heme b pocket. The tract at residues 362 to 407 (SKKKPTDGDKSEEPSNVESRGTGGTNPMTFLRSVKDTTEKALLSWP) is disordered. Residues 365 to 374 (KPTDGDKSEE) show a composition bias toward basic and acidic residues.

The protein belongs to the indoleamine 2,3-dioxygenase family. In terms of assembly, monomer. The cofactor is heme b. Highly expressed in epididymis, duodemum, jejunum, ileum, colon and spleen. Highly expressed in epididymis, prostate, duodemum, jejunum, ileum, colon and spleen, not detected in the liver (at protein level). Expressed in tumors only upon exposure to IFN gamma. Constitutively expressed in placenta in trophoblast cells. Expression is restricted to perinuclear regions of primary trophoblast giant cells (TGCs) of fetal origin at mid-gestation (10.5 dpc). After placentation (14 dpc), no IDO expression was detected at the maternal-fetal interface.

It is found in the cytoplasm. Its subcellular location is the cytosol. It carries out the reaction D-tryptophan + O2 = N-formyl-D-kynurenine. It catalyses the reaction L-tryptophan + O2 = N-formyl-L-kynurenine. Its activity is regulated as follows. Activity is inhibited by and MTH-trp (methylthiohydantoin-DL-tryptophan), modestly inhibited by L-1MT (1-methyl-L-tryptophan) but not D-1MT (1-methyl-D-tryptophan). Its function is as follows. Catalyzes the first and rate limiting step of the catabolism of the essential amino acid tryptophan along the kynurenine pathway. Involved in the peripheral immune tolerance, contributing to maintain homeostasis by preventing autoimmunity or immunopathology that would result from uncontrolled and overreacting immune responses. Tryptophan shortage inhibits T lymphocytes division and accumulation of tryptophan catabolites induces T-cell apoptosis and differentiation of regulatory T-cells. Acts as a suppressor of anti-tumor immunity. Limits the growth of intracellular pathogens by depriving tryptophan. Protects the fetus from maternal immune rejection. This is Indoleamine 2,3-dioxygenase 1 from Mus musculus (Mouse).